The following is a 469-amino-acid chain: 3-isopropylmalate dehydratase large subunit (469 aa).

[4Fe-4S] cluster-binding residues include Cys-350, Cys-410, and Cys-413.

This sequence belongs to the aconitase/IPM isomerase family. LeuC type 1 subfamily. As to quaternary structure, heterodimer of LeuC and LeuD. It depends on [4Fe-4S] cluster as a cofactor.

The catalysed reaction is (2R,3S)-3-isopropylmalate = (2S)-2-isopropylmalate. The protein operates within amino-acid biosynthesis; L-leucine biosynthesis; L-leucine from 3-methyl-2-oxobutanoate: step 2/4. Catalyzes the isomerization between 2-isopropylmalate and 3-isopropylmalate, via the formation of 2-isopropylmaleate. The sequence is that of 3-isopropylmalate dehydratase large subunit from Mesorhizobium japonicum (strain LMG 29417 / CECT 9101 / MAFF 303099) (Mesorhizobium loti (strain MAFF 303099)).